Here is a 299-residue protein sequence, read N- to C-terminus: Mitochondrial magnesium exporter 1 (299 aa).

3 Solcar repeats span residues 12-103 (SNPV…GKRL), 112-200 (LTYP…LQEL), and 210-296 (ISTT…TNDL). 4 consecutive transmembrane segments (helical) span residues 79 to 99 (ISAP…VYAA), 114 to 134 (YPQI…VTVP), 216 to 236 (ILSG…FDVL), and 272 to 292 (ILPI…GVEL).

This sequence belongs to the mitochondrial carrier (TC 2.A.29) family.

The protein resides in the mitochondrion membrane. Functionally, mediates efflux of magnesium ions from mitochondria, suggesting a role in magnesium homeostasis. This Drosophila melanogaster (Fruit fly) protein is Mitochondrial magnesium exporter 1.